The following is a 64-amino-acid chain: Translation machinery-associated protein 7 homolog (64 aa).

The interval 1–64 (MSGREGGKKK…QGGIKKSGKK (64 aa)) is disordered. Residues 21-50 (EMDEDTAAFKAKQKEQQKALEAAKQKATKG) adopt a coiled-coil conformation. Positions 32–44 (KQKEQQKALEAAK) are enriched in basic and acidic residues.

It belongs to the TMA7 family.

This Anopheles gambiae (African malaria mosquito) protein is Translation machinery-associated protein 7 homolog.